A 408-amino-acid polypeptide reads, in one-letter code: Dual-specificity RNA methyltransferase RlmN (408 aa).

Glu93 acts as the Proton acceptor in catalysis. The 281-residue stretch at 99–379 folds into the Radical SAM core domain; the sequence is ETNRGTLCIS…TTTRKTRGDD (281 aa). Residues Cys106 and Cys384 are joined by a disulfide bond. Positions 113, 117, and 120 each coordinate [4Fe-4S] cluster. The tract at residues 152–196 is disordered; it reads SPAGSKDGDGGPDHASRATKLDHRAADAKGVQSDSWRSSDPEEDH. A compositionally biased stretch (basic and acidic residues) spans 157 to 178; that stretch reads KDGDGGPDHASRATKLDHRAAD. S-adenosyl-L-methionine contacts are provided by residues 210 to 211, Ser242, 264 to 266, and Asn341; these read GE and SLH. The active-site S-methylcysteine intermediate is the Cys384.

The protein belongs to the radical SAM superfamily. RlmN family. The cofactor is [4Fe-4S] cluster.

The protein localises to the cytoplasm. It catalyses the reaction adenosine(2503) in 23S rRNA + 2 reduced [2Fe-2S]-[ferredoxin] + 2 S-adenosyl-L-methionine = 2-methyladenosine(2503) in 23S rRNA + 5'-deoxyadenosine + L-methionine + 2 oxidized [2Fe-2S]-[ferredoxin] + S-adenosyl-L-homocysteine. The enzyme catalyses adenosine(37) in tRNA + 2 reduced [2Fe-2S]-[ferredoxin] + 2 S-adenosyl-L-methionine = 2-methyladenosine(37) in tRNA + 5'-deoxyadenosine + L-methionine + 2 oxidized [2Fe-2S]-[ferredoxin] + S-adenosyl-L-homocysteine. Specifically methylates position 2 of adenine 2503 in 23S rRNA and position 2 of adenine 37 in tRNAs. m2A2503 modification seems to play a crucial role in the proofreading step occurring at the peptidyl transferase center and thus would serve to optimize ribosomal fidelity. This Aromatoleum aromaticum (strain DSM 19018 / LMG 30748 / EbN1) (Azoarcus sp. (strain EbN1)) protein is Dual-specificity RNA methyltransferase RlmN.